The primary structure comprises 105 residues: MKEAVKMSCLCIFLFLFLFSLTDAIKCIKCGESGLFGTEDCVTGNFEAEECGPNDQYCTKIILNDGTRTTAQRGCSVGHVPESNQKDGKVSTHMSSCNTDGCNAN.

The first 24 residues, 1-24 (MKEAVKMSCLCIFLFLFLFSLTDA), serve as a signal peptide directing secretion. The segment at 79–105 (HVPESNQKDGKVSTHMSSCNTDGCNAN) is disordered. Over residues 92 to 105 (THMSSCNTDGCNAN) the composition is skewed to polar residues.

It belongs to the scoloptoxin-05 family. In terms of processing, contains 4 disulfide bonds. Expressed by the venom gland.

The protein resides in the secreted. This is U-scoloptoxin(05)-Sa2a from Scolopendra alternans (Florida Keys giant centipede).